A 266-amino-acid polypeptide reads, in one-letter code: Indole-3-glycerol phosphate synthase (266 aa).

It belongs to the TrpC family.

The enzyme catalyses 1-(2-carboxyphenylamino)-1-deoxy-D-ribulose 5-phosphate + H(+) = (1S,2R)-1-C-(indol-3-yl)glycerol 3-phosphate + CO2 + H2O. It functions in the pathway amino-acid biosynthesis; L-tryptophan biosynthesis; L-tryptophan from chorismate: step 4/5. The chain is Indole-3-glycerol phosphate synthase from Janthinobacterium sp. (strain Marseille) (Minibacterium massiliensis).